Reading from the N-terminus, the 567-residue chain is Membrane protein insertase YidC (567 aa).

The chain crosses the membrane as a helical span at residues 3-23 (IQRIVLFAGLAIVSYLMVLAW). Positions 32–80 (TEQVAEAQSSSDSSATNSTDDMILPEDNNAGGEEFATPETGSLASTSAN) are disordered. Over residues 40-52 (SSSDSSATNSTDD) the composition is skewed to low complexity. A compositionally biased stretch (polar residues) spans 70 to 80 (ETGSLASTSAN). A run of 5 helical transmembrane segments spans residues 354 to 374 (FGWL…FYGL), 378 to 398 (WGVA…HLSA), 445 to 465 (GGCL…WVLF), 485 to 505 (MDPY…QMSL), and 522 to 542 (PLIF…YWLV).

It belongs to the OXA1/ALB3/YidC family. Type 1 subfamily. In terms of assembly, interacts with the Sec translocase complex via SecD. Specifically interacts with transmembrane segments of nascent integral membrane proteins during membrane integration.

The protein localises to the cell inner membrane. Functionally, required for the insertion and/or proper folding and/or complex formation of integral membrane proteins into the membrane. Involved in integration of membrane proteins that insert both dependently and independently of the Sec translocase complex, as well as at least some lipoproteins. Aids folding of multispanning membrane proteins. This Marinobacter nauticus (strain ATCC 700491 / DSM 11845 / VT8) (Marinobacter aquaeolei) protein is Membrane protein insertase YidC.